Here is a 2635-residue protein sequence, read N- to C-terminus: Protein unc-79 homolog (2635 aa).

A phosphoserine mark is found at Ser-754 and Ser-758. Disordered stretches follow at residues Gly-907–Glu-929, Ile-1538–Arg-1575, Leu-1607–Ser-1678, Ser-1693–Gln-1832, Leu-1863–Arg-1909, and Leu-1929–Gly-1950. Residues Ser-1666–Ser-1678 show a composition bias toward low complexity. Positions Lys-1699–Ala-1713 are enriched in polar residues. Residues Leu-1761–Gly-1775 are compositionally biased toward basic and acidic residues. Composition is skewed to polar residues over residues Glu-1897–Arg-1909 and Leu-1929–Ile-1947. Helical transmembrane passes span Leu-2223–Gly-2243 and Val-2466–Cys-2486.

It belongs to the unc-79 family. NALCN complex consists of NALCN and auxiliary subunits, UNC79, UNC80 and NACL1. These auxiliary subunits are essential for the NALCN channel function. UNC80 bridges NALCN to UNC79.

The protein localises to the cell membrane. Auxiliary subunit of the NALCN sodium channel complex, a voltage-gated ion channel responsible for the resting Na(+) permeability that controls neuronal excitability. Activated by neuropeptides substance P, neurotensin, and extracellular calcium that regulates neuronal excitability by controlling the sizes of NALCN-dependent sodium-leak current. This is Protein unc-79 homolog (UNC79) from Homo sapiens (Human).